A 349-amino-acid polypeptide reads, in one-letter code: Glycosyltransferase 8 domain-containing protein 2 (349 aa).

The Cytoplasmic segment spans residues 1 to 6 (MALLRK). A helical; Signal-anchor for type II membrane protein transmembrane segment spans residues 7–24 (INQVLLFLLIVTLCVILY). At 25–349 (KKVHKGTVSK…AGIFKLNHHS (325 aa)) the chain is on the lumenal side. Residue N234 is glycosylated (N-linked (GlcNAc...) asparagine).

Belongs to the glycosyltransferase 8 family.

The protein localises to the membrane. In Macaca fascicularis (Crab-eating macaque), this protein is Glycosyltransferase 8 domain-containing protein 2 (GLT8D2).